The sequence spans 177 residues: Ecotin (177 aa).

The N-terminal stretch at 1–23 (MQASIQNRIFFGLVVLWSTTVLE) is a signal peptide. The cysteines at positions 83 and 122 are disulfide-linked.

The protein belongs to the protease inhibitor I11 (ecotin) family. Homodimer.

Its subcellular location is the periplasm. General inhibitor of family S1 serine proteases. The chain is Ecotin from Prochlorococcus marinus (strain MIT 9313).